Here is a 603-residue protein sequence, read N- to C-terminus: ABC transporter E family member 1 (603 aa).

2 4Fe-4S ferredoxin-type domains span residues 7-39 (RIAI…KLCI) and 46-75 (KSAF…IINL). 2 ABC transporter domains span residues 70 to 315 (IQII…FLAG) and 344 to 566 (VKSY…LSHL). Residues 110 to 117 (GTNGIGKS) and 381 to 388 (GENGTGKT) contribute to the ATP site.

Belongs to the ABC transporter superfamily. ABCE family. Expressed in roots, stems, leaves, flowers and siliques.

The protein resides in the membrane. The polypeptide is ABC transporter E family member 1 (ABCE1) (Arabidopsis thaliana (Mouse-ear cress)).